A 164-amino-acid chain; its full sequence is Phosphopantetheine adenylyltransferase (164 aa).

Position 11 (Ser-11) interacts with substrate. ATP-binding positions include 11 to 12 (SF) and His-19. Positions 43, 75, and 89 each coordinate substrate. Residues 90–92 (GLR), Glu-100, and 125–131 (YGYLSSS) contribute to the ATP site.

Belongs to the bacterial CoaD family. In terms of assembly, homohexamer. The cofactor is Mg(2+).

Its subcellular location is the cytoplasm. The enzyme catalyses (R)-4'-phosphopantetheine + ATP + H(+) = 3'-dephospho-CoA + diphosphate. It functions in the pathway cofactor biosynthesis; coenzyme A biosynthesis; CoA from (R)-pantothenate: step 4/5. Its function is as follows. Reversibly transfers an adenylyl group from ATP to 4'-phosphopantetheine, yielding dephospho-CoA (dPCoA) and pyrophosphate. The polypeptide is Phosphopantetheine adenylyltransferase (Geobacter sulfurreducens (strain ATCC 51573 / DSM 12127 / PCA)).